The primary structure comprises 184 residues: Large ribosomal subunit protein uL18 (184 aa).

Belongs to the universal ribosomal protein uL18 family. In terms of assembly, part of the 50S ribosomal subunit. Contacts the 5S and 23S rRNAs.

In terms of biological role, this is one of the proteins that bind and probably mediate the attachment of the 5S RNA into the large ribosomal subunit, where it forms part of the central protuberance. This Natronomonas pharaonis (strain ATCC 35678 / DSM 2160 / CIP 103997 / JCM 8858 / NBRC 14720 / NCIMB 2260 / Gabara) (Halobacterium pharaonis) protein is Large ribosomal subunit protein uL18.